We begin with the raw amino-acid sequence, 370 residues long: 3,5-dihydroxyphenylacetyl-CoA synthase (370 aa).

C158 is a catalytic residue.

Belongs to the thiolase-like superfamily. Chalcone/stilbene synthases family.

It catalyses the reaction 4 malonyl-CoA + 4 H(+) = (3,5-dihydroxyphenyl)acetyl-CoA + 4 CO2 + 3 CoA + H2O. The protein operates within antibiotic biosynthesis; vancomycin biosynthesis. Involved in the biosynthesis of the nonproteinogenic amino acid monomer (S)-3,5-dihydroxyphenylglycine (Dpg) responsible of the production of vancomycin and teicoplanin antibiotics. Catalyzes the Claisen condensation of four molecules of malonyl-CoA to yield 3,5-dihydroxyphenylacetyl-CoA (DPA-CoA) and three free coenzyme A (CoA). DpgA requires the presence of the dehydratases DpgB and DpgD to facilitate the aromatization of the DPA-S-DgpA or DPA-S-CoA intermediate. The sequence is that of 3,5-dihydroxyphenylacetyl-CoA synthase (dpgA) from Amycolatopsis orientalis (Nocardia orientalis).